Here is a 546-residue protein sequence, read N- to C-terminus: MHIDNIENLSDREFDYIVVGGGSAGAAVAARLSEDPAVSVALVEAGPDDRGVPEVLQLDRWMELLESGYDWDYPIEPQENGNSFMRHARAKVMGGCSSHNSCIAFWAPREDLDEWEAKYGATGWNAEAAWPLYKRLETNEDAGPDAPHHGDSGPVHLMNVPPKDPTGVALLDACEQAGIPRAKFNTGTTVVNGANFFQINRRADGTRSSSSVSYIHPIVEQENFTLLTGLRARQLVFDADRRCTGVDIVDSAFGHTHRLTARNEVVLSTGAIDTPKLLMLSGIGPAAHLAEHGIEVLVDSPGVGEHLQDHPEGVVQFEAKQPMVAESTQWWEIGIFTPTEDGLDRPDLMMHYGSVPFDMNTLRHGYPTTENGFSLTPNVTHARSRGTVRLRSRDFRDKPMVDPRYFTDPEGHDMRVMVAGIRKAREIAAQPAMAEWTGRELSPGVEAQTDEELQDYIRKTHNTVYHPVGTVRMGAVEDEMSPLDPELRVKGVTGLRVADASVMPEHVTVNPNITVMMIGERCADLIRSARAGETTTADAELSAALA.

Residues 23–24, Glu44, Trp71, 90–92, 96–103, Ala232, and Tyr465 contribute to the FAD site; these read SA, AKV, and CSSHNSCI. His99 bears the Tele-8alpha-FAD histidine mark. The active-site Proton acceptor is His466. FAD-binding positions include Ala500 and 510–512; that span reads NPN.

The protein belongs to the GMC oxidoreductase family. As to quaternary structure, homodimer. The cofactor is FAD.

It carries out the reaction choline + 2 O2 + H2O = glycine betaine + 2 H2O2 + H(+). It functions in the pathway amine and polyamine biosynthesis; betaine biosynthesis via choline pathway; betaine from choline: step 1/1. Its function is as follows. Catalyzes the two-step oxidative conversion of choline to glycine-betaine with betaine aldehyde as an intermediate. Glycine-betaine accumulates to high levels in the cytoplasm of cells to prevent dehydration and plasmolysis in adverse hyperosmotic environments. Accepts either choline or the reaction intermediate betaine-aldehyde as substrate. This is Choline oxidase (codA) from Arthrobacter globiformis.